A 410-amino-acid polypeptide reads, in one-letter code: E3 ubiquitin-protein ligase ICP0 (410 aa).

The segment at 46–85 (CPICLDVAATEAQTLPCMHKFCLDCIQRWTLTSTACPLCN) adopts an RING-type zinc-finger fold. A disordered region spans residues 243 to 410 (TSESEAHSDS…IFIDLTQDDD (168 aa)). The segment covering 287–315 (APRRSPRRARRAAVLRREQRRTRCLRRGR) has biased composition (basic residues). Composition is skewed to low complexity over residues 329-340 (SSGEGSSAQHGA) and 348-399 (GSAN…PRSA).

Auto-ubiquitinated.

The enzyme catalyses S-ubiquitinyl-[E2 ubiquitin-conjugating enzyme]-L-cysteine + [acceptor protein]-L-lysine = [E2 ubiquitin-conjugating enzyme]-L-cysteine + N(6)-ubiquitinyl-[acceptor protein]-L-lysine.. In terms of biological role, evades nuclear antiviral defenses triggered by dsDNA viruses. Acts during the initial stages of lytic infection and the reactivation of latent viral genome. Prevents the antiviral effect of nuclear bodies by degrading host PML and SP100. The polypeptide is E3 ubiquitin-protein ligase ICP0 (EP0) (Sus scrofa (Pig)).